The chain runs to 396 residues: Purine ribonucleoside efflux pump NepI (396 aa).

The Cytoplasmic portion of the chain corresponds to 1 to 21 (MSEFIAENRGADAITRPNWSA). The chain crosses the membrane as a helical span at residues 22-42 (VFSVAFCVACLIIVEFLPVSL). Residues 43-54 (LTPMAQDLGISE) lie on the Periplasmic side of the membrane. A helical membrane pass occupies residues 55 to 75 (GVAGQSVTVTAFVAMFASLFI). The Cytoplasmic segment spans residues 76-85 (TQTIQATDRR). The chain crosses the membrane as a helical span at residues 86–106 (NVVILFAVLLTLSCLLVSFAN). Serine 107 is a topological domain (periplasmic). Residues 108 to 128 (FSLLLIGRACLGLALGGFWAM) form a helical membrane-spanning segment. The Cytoplasmic segment spans residues 129 to 147 (SASLTMRLVPPRTVPKALS). Residues 148–168 (VIFGAVSIALVIAAPLGSFLG) form a helical membrane-spanning segment. Residues 169–175 (ELIGWRN) lie on the Periplasmic side of the membrane. Residues 176–196 (VFNAAAVMGVLCIFWIIKSLP) traverse the membrane as a helical segment. Residues 197 to 215 (SLPGEPSHQKQNTFRLLQR) are Cytoplasmic-facing. The chain crosses the membrane as a helical span at residues 216-236 (PGVMAGMIAIFMSFAGQFAFF). The Periplasmic portion of the chain corresponds to 237 to 255 (TYIRPVYMNLAGFSVDGLT). Residues 256 to 276 (LVLLSFGIASFIGTSLSSFIL) form a helical membrane-spanning segment. Topologically, residues 277–281 (KRSVK) are cytoplasmic. The chain crosses the membrane as a helical span at residues 282–302 (LALAGAPLILAVSALVLTLWG). Over 303–305 (SDK) the chain is Periplasmic. The helical transmembrane segment at 306 to 326 (IVATGVAIIWGLTFALVPVGW) threads the bilayer. Residues 327–343 (STWITRSLADQAEKAGS) are Cytoplasmic-facing. The chain crosses the membrane as a helical span at residues 344-364 (IQVAVIQLANTCGAAIGGYAL). Residues 365–366 (DN) lie on the Periplasmic side of the membrane. A helical membrane pass occupies residues 367 to 387 (IGLTSPLMFSGTLMLLTALLV). Topologically, residues 388 to 396 (TAKVKMKKS) are cytoplasmic.

This sequence belongs to the major facilitator superfamily. DHA1 family. NepI (TC 2.A.1.2.26) subfamily.

It localises to the cell inner membrane. It catalyses the reaction inosine(in) + H(+)(out) = inosine(out) + H(+)(in). The enzyme catalyses guanosine(in) + H(+)(out) = guanosine(out) + H(+)(in). In terms of biological role, involved in the efflux of purine ribonucleosides, such as inosine and guanosine. This Shigella sonnei (strain Ss046) protein is Purine ribonucleoside efflux pump NepI.